A 504-amino-acid chain; its full sequence is Maturase K (504 aa).

It belongs to the intron maturase 2 family. MatK subfamily.

Its subcellular location is the plastid. The protein localises to the chloroplast. In terms of biological role, usually encoded in the trnK tRNA gene intron. Probably assists in splicing its own and other chloroplast group II introns. The polypeptide is Maturase K (Arabidopsis halleri).